We begin with the raw amino-acid sequence, 438 residues long: Glutaryl-CoA dehydrogenase, mitochondrial (438 aa).

A mitochondrion-targeting transit peptide spans 1 to 44; sequence MALRGVYAQLLNRGPGLRVFRSWSSATAQTEKGEKTQSRSAKPS. Substrate contacts are provided by residues 138-139 and S186; that span reads RS. Residues 177–186, S186, and 212–214 contribute to the FAD site; these read FGLTEPNHGS and WIT. The residue at position 240 (K240) is an N6-acetyllysine. Position 287-294 (287-294) interacts with substrate; it reads FGCLNNAR. FAD-binding positions include R319, Q330, and 387–391; that span reads DMLGG. The active-site Proton acceptor is E414. Residue G415 participates in substrate binding. Residues T416, 416-418, and F434 each bind FAD; that span reads THD.

It belongs to the acyl-CoA dehydrogenase family. Homotetramer. Requires FAD as cofactor.

Its subcellular location is the mitochondrion matrix. The enzyme catalyses glutaryl-CoA + oxidized [electron-transfer flavoprotein] + 2 H(+) = (2E)-butenoyl-CoA + reduced [electron-transfer flavoprotein] + CO2. Its pathway is amino-acid metabolism; lysine degradation. It participates in amino-acid metabolism; tryptophan metabolism. In terms of biological role, catalyzes the oxidative decarboxylation of glutaryl-CoA to crotonyl-CoA and CO(2) in the degradative pathway of L-lysine, L-hydroxylysine, and L-tryptophan metabolism. It uses electron transfer flavoprotein as its electron acceptor. The chain is Glutaryl-CoA dehydrogenase, mitochondrial (GCDH) from Bos taurus (Bovine).